The sequence spans 140 residues: uncharacterized protein (140 aa).

Belongs to the SufE family.

This is an uncharacterized protein from Rhizobium meliloti (strain 1021) (Ensifer meliloti).